Reading from the N-terminus, the 417-residue chain is 4-hydroxy-3-methylbut-2-en-1-yl diphosphate synthase (flavodoxin) (417 aa).

Residues cysteine 304, cysteine 307, cysteine 350, and glutamate 357 each contribute to the [4Fe-4S] cluster site.

The protein belongs to the IspG family. [4Fe-4S] cluster is required as a cofactor.

The catalysed reaction is (2E)-4-hydroxy-3-methylbut-2-enyl diphosphate + oxidized [flavodoxin] + H2O + 2 H(+) = 2-C-methyl-D-erythritol 2,4-cyclic diphosphate + reduced [flavodoxin]. The protein operates within isoprenoid biosynthesis; isopentenyl diphosphate biosynthesis via DXP pathway; isopentenyl diphosphate from 1-deoxy-D-xylulose 5-phosphate: step 5/6. In terms of biological role, converts 2C-methyl-D-erythritol 2,4-cyclodiphosphate (ME-2,4cPP) into 1-hydroxy-2-methyl-2-(E)-butenyl 4-diphosphate. The polypeptide is 4-hydroxy-3-methylbut-2-en-1-yl diphosphate synthase (flavodoxin) (Sinorhizobium medicae (strain WSM419) (Ensifer medicae)).